The sequence spans 307 residues: Low-salt glycan biosynthesis hexosyltransferase Agl10 (307 aa).

The protein belongs to the glycosyltransferase 2 family.

It functions in the pathway protein modification; protein glycosylation. The protein operates within cell surface structure biogenesis; S-layer biogenesis. In terms of biological role, hexosyltransferase involved in N-glycan biosynthetic pathway that takes place under low-salt conditions (1.75 M instead of 3.4 M). Participates in the formation of the tetrasaccharide present at 'Asn-532' of S-layer glycoprotein Csg, consisting of a sulfated hexose, 2 hexoses and rhamnose. Involved in the addition of final rhamnose (sugar 4) of the tetrasaccharide on the dolichol phosphate carrier. The protein is Low-salt glycan biosynthesis hexosyltransferase Agl10 (agl10) of Haloferax volcanii (strain ATCC 29605 / DSM 3757 / JCM 8879 / NBRC 14742 / NCIMB 2012 / VKM B-1768 / DS2) (Halobacterium volcanii).